Consider the following 178-residue polypeptide: Ribonuclease M5 (178 aa).

Residues aspartate 10–alanine 103 form the Toprim domain. 3 residues coordinate Mg(2+): glutamate 16, aspartate 62, and aspartate 64.

This sequence belongs to the ribonuclease M5 family. The cofactor is Mg(2+).

Its subcellular location is the cytoplasm. The catalysed reaction is Endonucleolytic cleavage of RNA, removing 21 and 42 nucleotides, respectively, from the 5'- and 3'-termini of a 5S-rRNA precursor.. Its function is as follows. Required for correct processing of both the 5' and 3' ends of 5S rRNA precursor. Cleaves both sides of a double-stranded region yielding mature 5S rRNA in one step. This chain is Ribonuclease M5, found in Mycoplasma pneumoniae (strain ATCC 29342 / M129 / Subtype 1) (Mycoplasmoides pneumoniae).